We begin with the raw amino-acid sequence, 244 residues long: 1-(5-phosphoribosyl)-5-[(5-phosphoribosylamino)methylideneamino] imidazole-4-carboxamide isomerase (244 aa).

Aspartate 10 functions as the Proton acceptor in the catalytic mechanism. Aspartate 132 functions as the Proton donor in the catalytic mechanism.

It belongs to the HisA/HisF family.

It localises to the cytoplasm. It carries out the reaction 1-(5-phospho-beta-D-ribosyl)-5-[(5-phospho-beta-D-ribosylamino)methylideneamino]imidazole-4-carboxamide = 5-[(5-phospho-1-deoxy-D-ribulos-1-ylimino)methylamino]-1-(5-phospho-beta-D-ribosyl)imidazole-4-carboxamide. It participates in amino-acid biosynthesis; L-histidine biosynthesis; L-histidine from 5-phospho-alpha-D-ribose 1-diphosphate: step 4/9. The chain is 1-(5-phosphoribosyl)-5-[(5-phosphoribosylamino)methylideneamino] imidazole-4-carboxamide isomerase from Xanthomonas oryzae pv. oryzae (strain MAFF 311018).